The primary structure comprises 384 residues: Branched-chain-amino-acid aminotransferase 1, mitochondrial (384 aa).

Residues 1-18 (MALRRCLPQYSTTSSYLS) constitute a mitochondrion transit peptide. K231 is modified (N6-(pyridoxal phosphate)lysine).

Belongs to the class-IV pyridoxal-phosphate-dependent aminotransferase family. Pyridoxal 5'-phosphate serves as cofactor.

The protein localises to the mitochondrion. It carries out the reaction L-leucine + 2-oxoglutarate = 4-methyl-2-oxopentanoate + L-glutamate. The enzyme catalyses L-isoleucine + 2-oxoglutarate = (S)-3-methyl-2-oxopentanoate + L-glutamate. It catalyses the reaction L-valine + 2-oxoglutarate = 3-methyl-2-oxobutanoate + L-glutamate. The protein operates within amino-acid degradation; L-leucine degradation; 4-methyl-2-oxopentanoate from L-leucine (aminotransferase route): step 1/1. It functions in the pathway amino-acid degradation; L-valine degradation. Converts 2-oxo acids to branched-chain amino acids. Acts on leucine, isoleucine and valine. In Arabidopsis thaliana (Mouse-ear cress), this protein is Branched-chain-amino-acid aminotransferase 1, mitochondrial (BCAT1).